Here is a 391-residue protein sequence, read N- to C-terminus: MALPSSRRFKSPTTLAFFLVGVTLVVLNQWFLQEHRQEKAKGPVATRRSLAAVVQRSPLFQVPPCVANASANLLTGFQLLPARIQDFLRYRHCRRFPQLWDAPPKCAGPRGVFLLLAVKSSPAHYERRELIRRTWGQERSYSGRQVLRLFLVGTSPPEEAAREPQLADLLSLEAREYGDVLQWDFSDTFLNLTLKHLHLLDWTAEHCPGVSFLLSCDDDVFVHTANVLSFLEVQSPEHHLFTGQLMVGSVPVRESGSKYFVPPQIFPGVAYPAYCSGGGFLLSRYTVRNLRSAAHHVPLFPIDDAYMGMCLQQAGLAPSSHQGIRPFGVQLPNVQRLSLDPCMYRELLLVHRFAPYEMLLMWKALHNPALHCSHKQVAGSPTAGEQNPDAH.

The Cytoplasmic segment spans residues 1 to 11 (MALPSSRRFKS). Residues 12–32 (PTTLAFFLVGVTLVVLNQWFL) form a helical; Signal-anchor for type II membrane protein membrane-spanning segment. Over 33-391 (QEHRQEKAKG…TAGEQNPDAH (359 aa)) the chain is Lumenal. N-linked (GlcNAc...) asparagine glycosylation is found at N68 and N191.

Belongs to the glycosyltransferase 31 family.

It localises to the golgi apparatus membrane. It catalyses the reaction a 3-O-[N-acetyl-alpha-D-galactosaminyl]-L-threonyl-[protein] + UDP-N-acetyl-alpha-D-glucosamine = a 3-O-[N-acetyl-beta-D-glucosaminyl-(1-&gt;3)-N-acetyl-alpha-D-galactosaminyl]-L-threonyl-[protein] + UDP + H(+). The catalysed reaction is a 3-O-[N-acetyl-alpha-D-galactosaminyl]-L-seryl-[protein] + UDP-N-acetyl-alpha-D-glucosamine = 3-O-[N-acetyl-beta-D-glucosaminyl-(1-&gt;3)-N-acetyl-alpha-D-galactosaminyl]-L-seryl-[protein] + UDP + H(+). It participates in protein modification; protein glycosylation. In terms of biological role, beta-1,3-N-acetylglucosaminyltransferase that synthesizes the core 3 structure of the O-glycan, an important precursor in the biosynthesis of mucin-type glycoproteins. Plays an important role in the synthesis of mucin-type O-glycans in digestive organs. The chain is Acetylgalactosaminyl-O-glycosyl-glycoprotein beta-1,3-N-acetylglucosaminyltransferase (B3gnt6) from Mus musculus (Mouse).